A 206-amino-acid polypeptide reads, in one-letter code: Small ribosomal subunit protein uS4 (206 aa).

The S4 RNA-binding domain maps to 96–158; the sequence is GRLDNVVYRM…AKKQSRIKAA (63 aa).

This sequence belongs to the universal ribosomal protein uS4 family. As to quaternary structure, part of the 30S ribosomal subunit. Contacts protein S5. The interaction surface between S4 and S5 is involved in control of translational fidelity.

Its function is as follows. One of the primary rRNA binding proteins, it binds directly to 16S rRNA where it nucleates assembly of the body of the 30S subunit. Functionally, with S5 and S12 plays an important role in translational accuracy. The polypeptide is Small ribosomal subunit protein uS4 (Vibrio cholerae serotype O1 (strain ATCC 39541 / Classical Ogawa 395 / O395)).